Here is a 376-residue protein sequence, read N- to C-terminus: Erythronate-4-phosphate dehydrogenase (376 aa).

Substrate contacts are provided by Ser-45 and Thr-67. Asp-147 is an NAD(+) binding site. The active site involves Arg-209. Asp-233 provides a ligand contact to NAD(+). Glu-238 is a catalytic residue. The Proton donor role is filled by His-255. An NAD(+)-binding site is contributed by Gly-258. Residue Tyr-259 participates in substrate binding.

Belongs to the D-isomer specific 2-hydroxyacid dehydrogenase family. PdxB subfamily. Homodimer.

It localises to the cytoplasm. It catalyses the reaction 4-phospho-D-erythronate + NAD(+) = (R)-3-hydroxy-2-oxo-4-phosphooxybutanoate + NADH + H(+). It participates in cofactor biosynthesis; pyridoxine 5'-phosphate biosynthesis; pyridoxine 5'-phosphate from D-erythrose 4-phosphate: step 2/5. Its function is as follows. Catalyzes the oxidation of erythronate-4-phosphate to 3-hydroxy-2-oxo-4-phosphonooxybutanoate. The protein is Erythronate-4-phosphate dehydrogenase of Shewanella sp. (strain MR-4).